A 463-amino-acid polypeptide reads, in one-letter code: Nitrogenase iron-molybdenum cofactor biosynthesis protein NifE (463 aa).

Belongs to the NifD/NifK/NifE/NifN family.

The protein operates within cofactor biosynthesis; Fe-Mo cofactor biosynthesis. This protein may play a role in the biosynthesis of the prosthetic group of nitrogenase (FeMo cofactor). This is Nitrogenase iron-molybdenum cofactor biosynthesis protein NifE (nifE2) from Methanosarcina barkeri.